A 143-amino-acid polypeptide reads, in one-letter code: Putative pre-16S rRNA nuclease (143 aa).

Belongs to the YqgF nuclease family.

Its subcellular location is the cytoplasm. Could be a nuclease involved in processing of the 5'-end of pre-16S rRNA. This Leuconostoc citreum (strain KM20) protein is Putative pre-16S rRNA nuclease.